The following is a 179-amino-acid chain: ADP-ribosylation factor-like protein 5B (179 aa).

Glycine 2 carries the N-myristoyl glycine lipid modification. GTP contacts are provided by residues 23–30 (GLDNAGKT), 66–70 (DIGGQ), 125–128 (NKQD), and alanine 159.

Belongs to the small GTPase superfamily. Arf family.

Functionally, binds and exchanges GTP and GDP. This is ADP-ribosylation factor-like protein 5B (Arl5b) from Mus musculus (Mouse).